Consider the following 959-residue polypeptide: Atromentin synthetase invA1 (959 aa).

The segment at 59-466 is adenylation (A) domain; the sequence is DSSIQTKTFS…SGRIKETVIV (408 aa). One can recognise a Carrier domain in the interval 598–676; that stretch reads TPQTETEQTL…SLANYIVALK (79 aa). The segment at 603-673 is thiolation and peptide carrier (T) domain; the sequence is TEQTLAAIYA…VVSSLANYIV (71 aa). At Ser635 the chain carries O-(pantetheine 4'-phosphoryl)serine. Positions 699–946 are thioesterase (TE) domain; sequence PIFMVHPGVG…LMDFDHVPGF (248 aa).

The protein belongs to the ATP-dependent AMP-binding enzyme family.

It functions in the pathway secondary metabolite biosynthesis. Functionally, an L-tyrosine:2-oxoglutarate aminotransferase (probably invD) and atromentin synthetase invA1 catalyze consecutive steps to turn over L-tyrosine into atromentin, which represents the generic precursor molecule for the entire terphenylquinone and pulvinic acid family of pigments, which are widely distributed secondary metabolites in homobasidiomycetes. The first step catalyzed by the aminotransferase converts L-tyrosine in to 4-hydroxyphenylpyruvate (4-HPP). Adenylation of two 4-HPP monomers by the invA1 adenylation (A) domain, covalent tethering of the monomers as a thioester and oxoester onto the invA1 thiolation (T) and thioesterase (TE) domains, respectively, and symmetric C-C-bond formation between two monomers catalyzed by the invA1 TE domain leads to atromentin. The protein is Atromentin synthetase invA1 (invA1) of Paxillus involutus (Naked brimcap).